Consider the following 159-residue polypeptide: MHPIRKKRLTIVLFLVAGIAIAVGLTTYALRQNINLFYDPTEIAAGNAPVDVRIRAGGMVEEGSVSRDTDSLKVNFRVTDYAASVPVQYEGILPDLFAEGQGVVAMGRLNEQGVFVADQVLAKHDENYMPPEVAEALERSSKGQHKSADVEKAAETTAY.

Residues 1–8 (MHPIRKKR) lie on the Cytoplasmic side of the membrane. A helical; Signal-anchor for type II membrane protein membrane pass occupies residues 9 to 29 (LTIVLFLVAGIAIAVGLTTYA). Over 30 to 159 (LRQNINLFYD…VEKAAETTAY (130 aa)) the chain is Periplasmic. 2 residues coordinate heme: His124 and Tyr128. Residues 135-159 (EALERSSKGQHKSADVEKAAETTAY) are disordered. Over residues 136–159 (ALERSSKGQHKSADVEKAAETTAY) the composition is skewed to basic and acidic residues.

This sequence belongs to the CcmE/CycJ family.

It localises to the cell inner membrane. Its function is as follows. Heme chaperone required for the biogenesis of c-type cytochromes. Transiently binds heme delivered by CcmC and transfers the heme to apo-cytochromes in a process facilitated by CcmF and CcmH. The chain is Cytochrome c-type biogenesis protein CcmE from Marinobacter nauticus (strain ATCC 700491 / DSM 11845 / VT8) (Marinobacter aquaeolei).